Reading from the N-terminus, the 162-residue chain is Lymphocyte antigen 86 (162 aa).

Positions 1–19 (MNGVAAALLVWILTSPSSS) are cleaved as a signal peptide. 3 disulfide bridges follow: cysteine 33–cysteine 58, cysteine 45–cysteine 154, and cysteine 102–cysteine 112. Residue asparagine 96 is glycosylated (N-linked (GlcNAc...) asparagine). Asparagine 156 carries an N-linked (GlcNAc...) asparagine glycan.

As to quaternary structure, M-shaped tetramer of two CD180-LY86 heterodimers. Highly expressed in spleen, liver, brain and thymus, and at lower levels in kidney.

The protein resides in the secreted. It is found in the extracellular space. In terms of biological role, may cooperate with CD180 and TLR4 to mediate the innate immune response to bacterial lipopolysaccharide (LPS) and cytokine production. Important for efficient CD180 cell surface expression. The protein is Lymphocyte antigen 86 (Ly86) of Mus musculus (Mouse).